The primary structure comprises 143 residues: Putative complexin-1 (143 aa).

The interval 15 to 71 (NEVTGGLGLKDDGGEKTETGEDPEVVAARLEQEERRKEKHRKMEQEREKMRQGIRDK) is disordered. Basic and acidic residues-rich tracts occupy residues 23-33 (LKDDGGEKTET) and 44-71 (LEQEERRKEKHRKMEQEREKMRQGIRDK). The stretch at 40-71 (VAARLEQEERRKEKHRKMEQEREKMRQGIRDK) forms a coiled coil.

Belongs to the complexin/synaphin family.

The protein resides in the cytoplasm. Its subcellular location is the cytosol. In terms of biological role, positively regulates a late step in synaptic vesicle exocytosis. The chain is Putative complexin-1 (cpx-1) from Caenorhabditis briggsae.